The chain runs to 239 residues: Ribonuclease HII (239 aa).

One can recognise an RNase H type-2 domain in the interval 30 to 221 (GPVAGVDEVG…VRRVATRSNG (192 aa)). A divalent metal cation-binding residues include Asp36, Glu37, and Asp130. Positions 217-239 (TRSNGAATAEREADPPQERDGTG) are disordered. The span at 225 to 239 (AEREADPPQERDGTG) shows a compositional bias: basic and acidic residues.

The protein belongs to the RNase HII family. Mn(2+) is required as a cofactor. Requires Mg(2+) as cofactor.

Its subcellular location is the cytoplasm. It carries out the reaction Endonucleolytic cleavage to 5'-phosphomonoester.. In terms of biological role, endonuclease that specifically degrades the RNA of RNA-DNA hybrids. The polypeptide is Ribonuclease HII (Mycobacterium ulcerans (strain Agy99)).